A 64-amino-acid polypeptide reads, in one-letter code: Alpha-mammal toxin BmK-M8 (64 aa).

An LCN-type CS-alpha/beta domain is found at 2–64; the sequence is RDAYIADSEN…ERIKEPGKCG (63 aa). 4 disulfides stabilise this stretch: Cys-12-Cys-63, Cys-16-Cys-36, Cys-22-Cys-46, and Cys-26-Cys-48.

This sequence belongs to the long (4 C-C) scorpion toxin superfamily. Sodium channel inhibitor family. Alpha subfamily. As to expression, expressed by the venom gland.

The protein resides in the secreted. Functionally, alpha toxins bind voltage-independently at site-3 of sodium channels (Nav) and inhibit the inactivation of the activated channels, thereby blocking neuronal transmission. This acidic toxin has a weak toxicity and is active against mammals. The chain is Alpha-mammal toxin BmK-M8 from Olivierus martensii (Manchurian scorpion).